A 960-amino-acid polypeptide reads, in one-letter code: UvrABC system protein A (960 aa).

35-42 (GLSGSGKS) is an ATP binding site. The segment at 270 to 297 (CAHCNVSVPELQPRLFSFNAPFGACPSC) adopts a C4-type zinc-finger fold. ABC transporter domains follow at residues 327–605 (FKPE…QASL) and 625–953 (GNGN…WYIK). 657-664 (GVSGSGKS) lines the ATP pocket. Residues 756-782 (CEHCKGDGVITIEMNFLPDVYITCDVC) form a C4-type zinc finger.

It belongs to the ABC transporter superfamily. UvrA family. Forms a heterotetramer with UvrB during the search for lesions.

Its subcellular location is the cytoplasm. In terms of biological role, the UvrABC repair system catalyzes the recognition and processing of DNA lesions. UvrA is an ATPase and a DNA-binding protein. A damage recognition complex composed of 2 UvrA and 2 UvrB subunits scans DNA for abnormalities. When the presence of a lesion has been verified by UvrB, the UvrA molecules dissociate. The protein is UvrABC system protein A of Treponema pallidum (strain Nichols).